Here is a 102-residue protein sequence, read N- to C-terminus: Large ribosomal subunit protein bL21 (102 aa).

The protein belongs to the bacterial ribosomal protein bL21 family. Part of the 50S ribosomal subunit. Contacts protein L20.

This protein binds to 23S rRNA in the presence of protein L20. This Staphylococcus aureus protein is Large ribosomal subunit protein bL21.